A 173-amino-acid chain; its full sequence is Co-chaperone protein HscB homolog (173 aa).

In terms of domain architecture, J spans 5–77 (CHYALFDLQP…PRRARYLLAI (73 aa)).

It belongs to the HscB family. Interacts with HscA and stimulates its ATPase activity.

Functionally, co-chaperone involved in the maturation of iron-sulfur cluster-containing proteins. Seems to help targeting proteins to be folded toward HscA. This chain is Co-chaperone protein HscB homolog, found in Pseudomonas putida (strain GB-1).